We begin with the raw amino-acid sequence, 258 residues long: Ribosomal RNA small subunit methyltransferase J (258 aa).

S-adenosyl-L-methionine-binding positions include glutamate 123–arginine 124 and aspartate 177. The disordered stretch occupies residues isoleucine 232–alanine 258. Over residues histidine 239–proline 252 the composition is skewed to basic and acidic residues.

This sequence belongs to the methyltransferase superfamily. RsmJ family.

The protein localises to the cytoplasm. It catalyses the reaction guanosine(1516) in 16S rRNA + S-adenosyl-L-methionine = N(2)-methylguanosine(1516) in 16S rRNA + S-adenosyl-L-homocysteine + H(+). Functionally, specifically methylates the guanosine in position 1516 of 16S rRNA. This Pseudomonas putida (strain GB-1) protein is Ribosomal RNA small subunit methyltransferase J.